We begin with the raw amino-acid sequence, 160 residues long: Secreted RxLR effector protein RXLR-C11 (160 aa).

The signal sequence occupies residues 1 to 19 (MHFSLVLLVFAAIVIPICA). Residues 58–75 (RLLRMNDKAVISDHEEER) carry the RxLR-dEER motif.

The protein belongs to the RxLR effector family.

The protein resides in the secreted. The protein localises to the host cell membrane. Its subcellular location is the host nucleus. Its function is as follows. Secreted effector that suppresses pattern-triggered immunity (PTI) in plant host. This Plasmopara halstedii (Downy mildew of sunflower) protein is Secreted RxLR effector protein RXLR-C11.